We begin with the raw amino-acid sequence, 735 residues long: Ribosomal protein S6 kinase alpha-1 (735 aa).

Residue Ser-54 is modified to Phosphoserine. One can recognise a Protein kinase 1 domain in the interval 62-321 (FELLKVLGQG…AEEIKRHVFY (260 aa)). ATP-binding positions include 68-76 (LGQGSFGKV) and Lys-94. Asp-187 (proton acceptor) is an active-site residue. Ser-221 carries the post-translational modification Phosphoserine; by PDPK1. Residue Ser-307 is modified to Phosphoserine. The region spanning 322–391 (STIDWNKLYR…VATGLMEDDG (70 aa)) is the AGC-kinase C-terminal domain. Thr-359 carries the phosphothreonine modification. Ser-363 and Ser-369 each carry phosphoserine. Ser-380 is modified (phosphoserine; by autocatalysis). A Protein kinase 2 domain is found at 418–675 (YVVKETIGVG…AKQVLQHPWV (258 aa)). ATP is bound by residues 424–432 (IGVGSYSEC) and Lys-447. Residue Asp-535 is the Proton acceptor of the active site. Thr-573 carries the phosphothreonine modification. Ser-732 is modified (phosphoserine).

Belongs to the protein kinase superfamily. AGC Ser/Thr protein kinase family. S6 kinase subfamily. Forms a complex with either MAPK1/ERK2 or MAPK3/ERK1 in quiescent cells. Transiently dissociates following mitogenic stimulation. Interacts with ETV1/ER81 and FGFR1. As to quaternary structure, (Microbial infection) Interacts with Kaposi's sarcoma-associated herpesvirus/HHV-8 protein ORF45; this interaction allows RPS6KA1 activation. Mg(2+) is required as a cofactor. Post-translationally, activated by phosphorylation at Ser-221 by PDPK1. Autophosphorylated on Ser-380, as part of the activation process. May be phosphorylated at Thr-359 and Ser-363 by MAPK1/ERK2 and MAPK3/ERK1. In terms of processing, N-terminal myristoylation results in an activated kinase in the absence of added growth factors.

The protein localises to the nucleus. It localises to the cytoplasm. It carries out the reaction L-seryl-[protein] + ATP = O-phospho-L-seryl-[protein] + ADP + H(+). The catalysed reaction is L-threonyl-[protein] + ATP = O-phospho-L-threonyl-[protein] + ADP + H(+). Its activity is regulated as follows. Upon extracellular signal or mitogen stimulation, phosphorylated at Thr-573 in the C-terminal kinase domain (CTKD) by MAPK1/ERK2 and MAPK3/ERK1. The activated CTKD then autophosphorylates Ser-380, allowing binding of PDPK1, which in turn phosphorylates Ser-221 in the N-terminal kinase domain (NTDK) leading to the full activation of the protein and subsequent phosphorylation of the substrates by the NTKD. Functionally, serine/threonine-protein kinase that acts downstream of ERK (MAPK1/ERK2 and MAPK3/ERK1) signaling and mediates mitogenic and stress-induced activation of the transcription factors CREB1, ETV1/ER81 and NR4A1/NUR77, regulates translation through RPS6 and EIF4B phosphorylation, and mediates cellular proliferation, survival, and differentiation by modulating mTOR signaling and repressing pro-apoptotic function of BAD and DAPK1. In fibroblast, is required for EGF-stimulated phosphorylation of CREB1, which results in the subsequent transcriptional activation of several immediate-early genes. In response to mitogenic stimulation (EGF and PMA), phosphorylates and activates NR4A1/NUR77 and ETV1/ER81 transcription factors and the cofactor CREBBP. Upon insulin-derived signal, acts indirectly on the transcription regulation of several genes by phosphorylating GSK3B at 'Ser-9' and inhibiting its activity. Phosphorylates RPS6 in response to serum or EGF via an mTOR-independent mechanism and promotes translation initiation by facilitating assembly of the pre-initiation complex. In response to insulin, phosphorylates EIF4B, enhancing EIF4B affinity for the EIF3 complex and stimulating cap-dependent translation. Is involved in the mTOR nutrient-sensing pathway by directly phosphorylating TSC2 at 'Ser-1798', which potently inhibits TSC2 ability to suppress mTOR signaling, and mediates phosphorylation of RPTOR, which regulates mTORC1 activity and may promote rapamycin-sensitive signaling independently of the PI3K/AKT pathway. Also involved in feedback regulation of mTORC1 and mTORC2 by phosphorylating DEPTOR. Mediates cell survival by phosphorylating the pro-apoptotic proteins BAD and DAPK1 and suppressing their pro-apoptotic function. Promotes the survival of hepatic stellate cells by phosphorylating CEBPB in response to the hepatotoxin carbon tetrachloride (CCl4). Mediates induction of hepatocyte prolifration by TGFA through phosphorylation of CEBPB. Is involved in cell cycle regulation by phosphorylating the CDK inhibitor CDKN1B, which promotes CDKN1B association with 14-3-3 proteins and prevents its translocation to the nucleus and inhibition of G1 progression. Phosphorylates EPHA2 at 'Ser-897', the RPS6KA-EPHA2 signaling pathway controls cell migration. In response to mTORC1 activation, phosphorylates EIF4B at 'Ser-406' and 'Ser-422' which stimulates bicarbonate cotransporter SLC4A7 mRNA translation, increasing SLC4A7 protein abundance and function. In terms of biological role, (Microbial infection) Promotes the late transcription and translation of viral lytic genes during Kaposi's sarcoma-associated herpesvirus/HHV-8 infection, when constitutively activated. The chain is Ribosomal protein S6 kinase alpha-1 (RPS6KA1) from Homo sapiens (Human).